A 244-amino-acid polypeptide reads, in one-letter code: MSKFYIENINLLNSEKKNNILSELNLLLSNYSAEERISWALSHLPHTQIMSSSFGIQSTVLLHLIIKKKPDIPVILIDTGYLFPETYNFIDFLTNKFHLNLKVFRSTISSAWQEARYGKLWEKGIEGIDFYNNINKVQPMNFALNELSVQTWFAGLRHDQSKSRNLLPYLSIKKGIFKILPILDWSKDKIKDYLKENNLDTHPLYNDGYSSVGDTHTTKKHMPGMLEEETRFFGLKRECGLHEN.

Catalysis depends on Cys-239, which acts as the Nucleophile; cysteine thiosulfonate intermediate.

The protein belongs to the PAPS reductase family. CysH subfamily.

It localises to the cytoplasm. It carries out the reaction [thioredoxin]-disulfide + sulfite + adenosine 3',5'-bisphosphate + 2 H(+) = [thioredoxin]-dithiol + 3'-phosphoadenylyl sulfate. It participates in sulfur metabolism; hydrogen sulfide biosynthesis; sulfite from sulfate: step 3/3. Functionally, catalyzes the formation of sulfite from phosphoadenosine 5'-phosphosulfate (PAPS) using thioredoxin as an electron donor. The chain is Phosphoadenosine 5'-phosphosulfate reductase from Buchnera aphidicola subsp. Acyrthosiphon pisum (strain 5A).